A 103-amino-acid chain; its full sequence is UPF0145 protein PTH_2690 (103 aa).

It belongs to the UPF0145 family.

This is UPF0145 protein PTH_2690 from Pelotomaculum thermopropionicum (strain DSM 13744 / JCM 10971 / SI).